Here is a 405-residue protein sequence, read N- to C-terminus: Prostaglandin E2 receptor EP1 subtype (405 aa).

The Extracellular segment spans residues 1 to 39; that stretch reads MSPYGLNLSLVDEATTCVTPRVPNTSVVLPTGGNGTSPA. 3 N-linked (GlcNAc...) asparagine glycosylation sites follow: asparagine 7, asparagine 24, and asparagine 34. The helical transmembrane segment at 40–62 threads the bilayer; it reads LPIFSMTLGAVSNVLALALLAQV. Residues 63 to 80 are Cytoplasmic-facing; the sequence is AGRLRRRRSTATFLLFVA. Residues 81–99 traverse the membrane as a helical segment; that stretch reads SLLAIDLAGHVIPGALVLR. The Extracellular segment spans residues 100 to 113; it reads LYTAGRAPAGGACH. A disulfide bridge connects residues cysteine 112 and cysteine 190. Residues 114 to 135 traverse the membrane as a helical segment; sequence FLGGCMVFFGLCPLLLGCGMAV. Residues 136–157 are Cytoplasmic-facing; it reads ERCVGVTQPLIHAARVSVARAR. A helical membrane pass occupies residues 158–179; the sequence is LALALLAAMALAVALLPLVHVG. Over 180–202 the chain is Extracellular; it reads HYELQYPGTWCFISLGPPGGWRQ. The chain crosses the membrane as a helical span at residues 203-228; sequence ALLAGLFAGLGLAALLAALVCNTLSG. Residues 229 to 301 are Cytoplasmic-facing; that stretch reads LALLRARWRR…HAHDVEMVGQ (73 aa). The helical transmembrane segment at 302–323 threads the bilayer; it reads LVGIMVVSCICWSPLLVLVVLA. At 324–337 the chain is on the extracellular side; it reads IGGWNSNSLQRPLF. The helical transmembrane segment at 338–357 threads the bilayer; that stretch reads LAVRLASWNQILDPWVYILL. Residues 358-405 lie on the Cytoplasmic side of the membrane; the sequence is RQAMLRQLLRLLPLRVSAKGGPTELSLTKSAWEASSLRSSRHSGFSHL.

It belongs to the G-protein coupled receptor 1 family. Post-translationally, phosphorylated. As to expression, highly abundant in kidney and lung. Found in a lesser extent in spleen, colon, and thymus. Also expressed in uterine myometrium and endometrium.

The protein localises to the cell membrane. Receptor for prostaglandin E2 (PGE2). The activity of this receptor is mediated by G(q) proteins which activate a phosphatidylinositol-calcium second messenger system. May play a role as an important modulator of renal function. Implicated the smooth muscle contractile response to PGE2 in various tissues. Isoform 1 and isoform 2 have identical ligand binding properties, but isoform 2 lacks coupling to calcium mobilization and may therefore attenuate the action of PGE2 on tissues. In Rattus norvegicus (Rat), this protein is Prostaglandin E2 receptor EP1 subtype (Ptger1).